Consider the following 72-residue polypeptide: Translation initiation factor IF-1 (72 aa).

The 72-residue stretch at Met-1–Lys-72 folds into the S1-like domain.

Belongs to the IF-1 family. Component of the 30S ribosomal translation pre-initiation complex which assembles on the 30S ribosome in the order IF-2 and IF-3, IF-1 and N-formylmethionyl-tRNA(fMet); mRNA recruitment can occur at any time during PIC assembly.

It is found in the cytoplasm. In terms of biological role, one of the essential components for the initiation of protein synthesis. Stabilizes the binding of IF-2 and IF-3 on the 30S subunit to which N-formylmethionyl-tRNA(fMet) subsequently binds. Helps modulate mRNA selection, yielding the 30S pre-initiation complex (PIC). Upon addition of the 50S ribosomal subunit IF-1, IF-2 and IF-3 are released leaving the mature 70S translation initiation complex. This is Translation initiation factor IF-1 from Wolinella succinogenes (strain ATCC 29543 / DSM 1740 / CCUG 13145 / JCM 31913 / LMG 7466 / NCTC 11488 / FDC 602W) (Vibrio succinogenes).